The primary structure comprises 374 residues: DNA replication and repair protein RecF (374 aa).

34–41 is a binding site for ATP; that stretch reads GDNGAGKT.

It belongs to the RecF family.

It localises to the cytoplasm. The RecF protein is involved in DNA metabolism; it is required for DNA replication and normal SOS inducibility. RecF binds preferentially to single-stranded, linear DNA. It also seems to bind ATP. The sequence is that of DNA replication and repair protein RecF from Rhizobium etli (strain ATCC 51251 / DSM 11541 / JCM 21823 / NBRC 15573 / CFN 42).